A 46-amino-acid chain; its full sequence is Photosystem II reaction center protein K (46 aa).

A propeptide spanning residues 1 to 9 (MIDALVLVA) is cleaved from the precursor. The Lumenal segment spans residues 10–19 (KLPEAYAIFD). The helical transmembrane segment at 20 to 39 (PLVDVLPVIPVLFLALAFVW) threads the bilayer. The Cytoplasmic segment spans residues 40–46 (QAAVGFR).

Belongs to the PsbK family. As to quaternary structure, PSII is composed of 1 copy each of membrane proteins PsbA, PsbB, PsbC, PsbD, PsbE, PsbF, PsbH, PsbI, PsbJ, PsbK, PsbL, PsbM, PsbT, PsbX, PsbY, PsbZ, Psb30/Ycf12, peripheral proteins PsbO, CyanoQ(PsbQ), PsbU, PsbV and a large number of cofactors. It forms dimeric complexes. Part of a photosystem II (PSII) assembly intermediate complex PSII-I; crystallized from a strain deleted of psbJ, it forms monomeric PSII before addition of the oxygen evolving complex. PSII-I includes 3 assembly factors not found in mature PSII (Psb27, Psb28 and Psb34). The cofactor is PSII binds multiple chlorophylls, carotenoids and specific lipids..

The protein resides in the cellular thylakoid membrane. Its function is as follows. One of the components of the core complex of photosystem II (PSII). PSII is a light-driven water:plastoquinone oxidoreductase that uses light energy to abstract electrons from H(2)O, generating O(2) and a proton gradient subsequently used for ATP formation. It consists of a core antenna complex that captures photons, and an electron transfer chain that converts photonic excitation into a charge separation. Required for association of PsbZ and Psb30/Ycf12 with PSII. The sequence is that of Photosystem II reaction center protein K from Thermosynechococcus vestitus (strain NIES-2133 / IAM M-273 / BP-1).